Consider the following 3462-residue polypeptide: DNA-directed RNA polymerase subunit beta'' (3462 aa).

Residues Cys-263, Cys-335, Cys-342, and Cys-345 each contribute to the Zn(2+) site. The insert-1 stretch occupies residues 541 to 1085 (KIDDQELSSV…PNKIFSSNLF (545 aa)). An insert-2 region spans residues 1528–1585 (PQSANERKQILKKARQKLRLFPLNLNEKKNRFSSVTLDLLRDQTTLHKMQSCGEAESG). Positions 1602–1699 (KKITEIFTFC…FSKQMGNRLL (98 aa)) are insert-3. Positions 1938-2168 (LKNKMNQSFS…SQASWILETN (231 aa)) are insert-4. Residues 2320–2870 (NLVSGKLNFL…KKKIAKEGAF (551 aa)) are insert-5. An insert-6 region spans residues 2972-3196 (SKSQRGWFHN…IGQLLRYGKE (225 aa)).

It belongs to the RNA polymerase beta' chain family. RpoC2 subfamily. In terms of assembly, in plastids the minimal PEP RNA polymerase catalytic core is composed of four subunits: alpha, beta, beta', and beta''. When a (nuclear-encoded) sigma factor is associated with the core the holoenzyme is formed, which can initiate transcription. Zn(2+) serves as cofactor.

It is found in the plastid. Its subcellular location is the chloroplast. It carries out the reaction RNA(n) + a ribonucleoside 5'-triphosphate = RNA(n+1) + diphosphate. In terms of biological role, DNA-dependent RNA polymerase catalyzes the transcription of DNA into RNA using the four ribonucleoside triphosphates as substrates. This chain is DNA-directed RNA polymerase subunit beta'', found in Tupiella akineta (Green alga).